A 314-amino-acid chain; its full sequence is Bifunctional pinoresinol-lariciresinol reductase (314 aa).

NADP(+) is bound by residues 10–16, R35, and K44; that span reads GGTGYIG. The active-site Proton acceptor is the K138. Residue R142 coordinates NADP(+). A substrate-binding site is contributed by H270.

The protein belongs to the NmrA-type oxidoreductase family. Isoflavone reductase subfamily. As to quaternary structure, dimer.

The catalysed reaction is (+)-lariciresinol + NADP(+) = (+)-pinoresinol + NADPH + H(+). The enzyme catalyses (+)-secoisolariciresinol + NADP(+) = (-)-lariciresinol + NADPH + H(+). Reductase involved in the lignan justicidin B biosynthesis. Catalyzes the enantioselective conversion of (+)-pinoresinol into (+)-lariciresinol and of (-)-lariciresinol into (+)-secoisolariciresinol. Low activity with the other enantiomers. Abstracts the 4R-hydride from the NADPH cofactor during catalysis. This chain is Bifunctional pinoresinol-lariciresinol reductase (PLR_Lp1), found in Linum perenne (Perennial flax).